The sequence spans 115 residues: Nitrogenase-stabilizing/protective protein NifW (115 aa).

It belongs to the NifW family. As to quaternary structure, homotrimer; associates with NifD.

Its function is as follows. May protect the nitrogenase Fe-Mo protein from oxidative damage. This is Nitrogenase-stabilizing/protective protein NifW from Stutzerimonas stutzeri (strain A1501) (Pseudomonas stutzeri).